A 11197-amino-acid polypeptide reads, in one-letter code: Nonribosomal peptide synthetase 5 (11197 aa).

An adenylation (A) domain 1 region spans residues 19 to 413 (AQRARKQPDA…DGTLQVVGHK (395 aa)). The disordered stretch occupies residues 426–452 (HASSSASSVGETPGVTGPISTPMGDSV). Residues 690–897 (KQLRQFCQEQ…LMDESMKQQI (208 aa)) are condensation (C) domain 1. An adenylation (A) domain 2 region spans residues 918-1310 (DAAQDYPDAP…GRHDGQLKVR (393 aa)). Positions 1446–1522 (ADRSPVHMML…DMANNIAISE (77 aa)) constitute a Carrier 1 domain. Position 1483 is an O-(pantetheine 4'-phosphoryl)serine (Ser-1483). Residues 1952-2380 (VEDVYPCSPV…SDISLMDPLS (429 aa)) are condensation (C) domain 2. Residues 2406 to 2805 (VARIEPDKMA…QRKDTQIKIR (400 aa)) form an adenylation (A) domain 3 region. One can recognise a Carrier 2 domain in the interval 2945–3021 (DSLTSTEVTI…SLAAFVDYDS (77 aa)). Position 2982 is an O-(pantetheine 4'-phosphoryl)serine (Ser-2982). The epimerase (E) domain 1 stretch occupies residues 3041–3481 (EESFALSPIQ…TSTMKSEFTL (441 aa)). The tract at residues 3515 to 3957 (EEIFPCSPMQ…VSPETRCELD (443 aa)) is condensation (C) domain 3. The tract at residues 3976 to 4371 (FEQQVEKIPD…RRRDNQVKVR (396 aa)) is adenylation (A) domain 4. The Carrier 3 domain maps to 4508-4584 (RKLTPMEQQL…ELANHARFKA (77 aa)). Ser-4545 carries the post-translational modification O-(pantetheine 4'-phosphoryl)serine. Residues 4603–5022 (FPLLPIQRMF…LNEYTAALRS (420 aa)) are epimerase (E) domain 2. The condensation (C) domain 4 stretch occupies residues 5069 to 5501 (ESIYPCSPLQ…LVGDSERQGL (433 aa)). The adenylation (A) domain 5 stretch occupies residues 5521 to 5918 (EAQVKAIPDN…RRKDTQVKVR (398 aa)). Positions 6068–6141 (SEAEDIIRAV…ALAQFVSQST (74 aa)) constitute a Carrier 4 domain. Ser-6102 carries the post-translational modification O-(pantetheine 4'-phosphoryl)serine. The epimerase (E) domain 3 stretch occupies residues 6162-6512 (FSLSPIQQMF…MEILFNYFGQ (351 aa)). Positions 6636–7076 (EEIFPCSPIQ…LVGAETRREM (441 aa)) are condensation (C) domain 5. The tract at residues 7097-7491 (ERNSQAMPDR…RRRDNQVKVR (395 aa)) is adenylation (A) domain 6. The 77-residue stretch at 7636–7712 (KPKTKMEEHF…DLAGRSRFKN (77 aa)) folds into the Carrier 5 domain. An O-(pantetheine 4'-phosphoryl)serine modification is found at Ser-7673. An epimerase (E) domain 4 region spans residues 7733–8162 (ALLPIQRLFF…KYMLETLASQ (430 aa)). Residues 8205–8638 (EASYPCSPLQ…MLGDSGRKRI (434 aa)) form a condensation (C) domain 6 region. Positions 8660-8832 (EAHVKESPNR…DHRATATEIV (173 aa)) are adenylation (A) domain 7. The Carrier 6 domain occupies 9173 to 9248 (SAQTAVVQII…AMAAKAQQIG (76 aa)). Ser-9209 is modified (O-(pantetheine 4'-phosphoryl)serine). The epimerase (E) domain 5 stretch occupies residues 9565 to 9683 (RVKDMRRAIP…LHEVVSALQK (119 aa)). Positions 9721–10116 (VEDVYPTSPM…LVPAKHMEQL (396 aa)) are condensation (C) domain 7. Residues 10136-10529 (DDMVRSTPTA…VGRKDTQIKI (394 aa)) are adenylation (A) domain 8. The Carrier 7 domain maps to 10663–10749 (LDSSDYVAMQ…TLAVTIKADM (87 aa)). Ser-10708 carries the O-(pantetheine 4'-phosphoryl)serine modification. Positions 10806 to 11104 (NFLVTGSTGF…SLRPMSGPEW (299 aa)) are thioesterase (TE) domain.

This sequence belongs to the NRP synthetase family.

Its pathway is secondary metabolite biosynthesis. Functionally, nonribosomal peptide synthetase; part of the Fg3_54/C64 gene cluster that mediates the biosynthesis of the octapeptide fusaoctaxin A, a virulence factor that is required for cell-to-cell invasiveness of plant host. The 2 nonribosomal peptide synthetases NRPS9 and NRPS5 form an assembly line which likely utilizes GABA as a starter unit (loaded on the unique module M1 of NRPS9) and sequentially incorporates seven extender units composed of the residues L-Ala, L-allo-Ile, L-Ser, L-Val, L-Ser, L-Leu and L-Leu, respectively. During the process, each of the residues that are tethered on modules M3-M7 of NRPS5 containing an E domain can undergo an epimerization reaction to produce a D-configuration before the transpeptidation reaction occurs. The elongation of the peptidyl chain might be terminated by module M8-mediated L-Leu incorporation, followed by R domain-catalyzed 4 electron reduction to release the resulting octapeptide from the assembly line as an alcohol. Fusaoctaxin A is cleaved by the cluster specific ABC transporter FGM5 to the pentapeptide fusapentaxin A and the tripeptide fusatrixin A. The other enzymes from the cluster, FGM1, FGM2, FGM3 and FGM9 seem not to be involved in the biosynthesis of fusaoctaxin A and their functions have still to be determined. The chain is Nonribosomal peptide synthetase 5 from Gibberella zeae (strain ATCC MYA-4620 / CBS 123657 / FGSC 9075 / NRRL 31084 / PH-1) (Wheat head blight fungus).